Here is a 1513-residue protein sequence, read N- to C-terminus: Exo-beta-1,6-galactobiohydrolase (1513 aa).

A signal peptide spans 1–31; the sequence is MRVLSKSLAAMVAAATLVGGGAFAVAGTAYA. In terms of domain architecture, Ricin B-type lectin spans 666 to 801; sequence VADTTSGDSA…PSANQTWTLR (136 aa). 2 consecutive F5/8 type C domains span residues 965–1112 and 1116–1273; these read AIYV…AFVT and GAAK…VFAQ. The tract at residues 1456–1480 is disordered; the sequence is VAPGPEEQKPGNTNKPGATGNGNKN. The span at 1465–1480 shows a compositional bias: polar residues; it reads PGNTNKPGATGNGNKN. Residues 1489 to 1509 form a helical membrane-spanning segment; it reads VAAIAGAVALLAAAAGALFML.

The protein belongs to the glycosyl hydrolase 30 family.

The protein localises to the cell membrane. It carries out the reaction Hydrolysis of (1-&gt;6)-beta-D-galactosidic linkages in arabinogalactan proteins and (1-&gt;3):(1-&gt;6)-beta-galactans to yield (1-&gt;6)-beta-galactobiose as the final product.. Involved in the type II arabinogalactan (AG) side chains degradation. Specifically releases the non-reducing terminal beta-1,6-galactobiose (beta-1,6-Gal2) from both dearabinosylated larch AG and polymeric beta-1,6-galactan chains by an exo-mode of action. Shows lower activity with larch AG, and very weak activity with dearabinosylated gum arabic, gum arabic and potato galactan. Can probably release beta-1,6-Gal2 from the internal side chains of type II AG. This is Exo-beta-1,6-galactobiohydrolase from Bifidobacterium longum subsp. longum (strain ATCC 15707 / DSM 20219 / JCM 1217 / NCTC 11818 / E194b).